Consider the following 156-residue polypeptide: Ribosomal RNA large subunit methyltransferase H (156 aa).

S-adenosyl-L-methionine-binding positions include Leu-73, Gly-104, and 123 to 128 (LSPLTL).

It belongs to the RNA methyltransferase RlmH family. In terms of assembly, homodimer.

The protein localises to the cytoplasm. It carries out the reaction pseudouridine(1915) in 23S rRNA + S-adenosyl-L-methionine = N(3)-methylpseudouridine(1915) in 23S rRNA + S-adenosyl-L-homocysteine + H(+). In terms of biological role, specifically methylates the pseudouridine at position 1915 (m3Psi1915) in 23S rRNA. The polypeptide is Ribosomal RNA large subunit methyltransferase H (Yersinia enterocolitica serotype O:8 / biotype 1B (strain NCTC 13174 / 8081)).